A 333-amino-acid polypeptide reads, in one-letter code: Ornithine carbamoyltransferase (333 aa).

Residues 57–60, glutamine 83, arginine 107, and 134–137 each bind carbamoyl phosphate; these read STRT and HPTQ. Residues asparagine 168, aspartate 232, and 236-237 each bind L-ornithine; that span reads SM. Carbamoyl phosphate is bound by residues 274–275 and arginine 319; that span reads CL.

This sequence belongs to the aspartate/ornithine carbamoyltransferase superfamily. OTCase family.

The protein resides in the cytoplasm. The enzyme catalyses carbamoyl phosphate + L-ornithine = L-citrulline + phosphate + H(+). The protein operates within amino-acid biosynthesis; L-arginine biosynthesis; L-arginine from L-ornithine and carbamoyl phosphate: step 1/3. Reversibly catalyzes the transfer of the carbamoyl group from carbamoyl phosphate (CP) to the N(epsilon) atom of ornithine (ORN) to produce L-citrulline. The sequence is that of Ornithine carbamoyltransferase from Photobacterium profundum (strain SS9).